The following is an 85-amino-acid chain: U4-theraphotoxin-Hhn1o (85 aa).

Positions Met-1–Ala-22 are cleaved as a signal peptide. A propeptide spanning residues Glu-23 to Arg-48 is cleaved from the precursor. 3 disulfides stabilise this stretch: Cys-52/Cys-66, Cys-56/Cys-77, and Cys-71/Cys-82.

This sequence belongs to the neurotoxin 12 (Hwtx-2) family. 02 (Hwtx-2) subfamily. In terms of tissue distribution, expressed by the venom gland.

It localises to the secreted. Its function is as follows. Postsynaptic neurotoxin. This Cyriopagopus hainanus (Chinese bird spider) protein is U4-theraphotoxin-Hhn1o.